A 412-amino-acid polypeptide reads, in one-letter code: Glucose-1-phosphate adenylyltransferase (412 aa).

Residues G163, 179–180, and S197 contribute to the alpha-D-glucose 1-phosphate site; that span reads EK.

It belongs to the bacterial/plant glucose-1-phosphate adenylyltransferase family. Homotetramer.

It carries out the reaction alpha-D-glucose 1-phosphate + ATP + H(+) = ADP-alpha-D-glucose + diphosphate. It functions in the pathway glycan biosynthesis; glycogen biosynthesis. Its function is as follows. Involved in the biosynthesis of ADP-glucose, a building block required for the elongation reactions to produce glycogen. Catalyzes the reaction between ATP and alpha-D-glucose 1-phosphate (G1P) to produce pyrophosphate and ADP-Glc. This is Glucose-1-phosphate adenylyltransferase from Frankia casuarinae (strain DSM 45818 / CECT 9043 / HFP020203 / CcI3).